The primary structure comprises 489 residues: Protein SIP5 (489 aa).

Residues 1–84 (MGNVPGKIDQ…RKTSREKELA (84 aa)) are disordered. Ser-13 is modified (phosphoserine). Polar residues-rich tracts occupy residues 21-32 (SSYNTTSSNSVI) and 51-69 (LVNN…GSHL). A phosphothreonine mark is found at Thr-183 and Thr-433. The disordered stretch occupies residues 419-489 (SNRLIDPSHS…SKNRNTSLRP (71 aa)). Position 436 is a phosphoserine (Ser-436). Position 438 is a phosphothreonine (Thr-438). Positions 461 to 477 (QMVREAIRLSLEDQDNR) are enriched in basic and acidic residues.

It belongs to the SIP5 family. Interacts with NPA1, SNF1 and REG1.

It localises to the cytoplasm. May negatively regulate the SNF1 kinase by promoting the interaction of the REG1/GLC7 phosphatase complex with the kinase. Deletion of SIP5 promotes resistance to artemisinin, which is probably an indirect effect of an action on the electron transport chain. This chain is Protein SIP5 (SIP5), found in Saccharomyces cerevisiae (strain ATCC 204508 / S288c) (Baker's yeast).